The following is a 601-amino-acid chain: Glutathione-regulated potassium-efflux system protein KefB (601 aa).

A run of 13 helical transmembrane segments spans residues 4-24, 29-49, 55-75, 87-107, 111-131, 152-172, 177-197, 207-227, 230-250, 262-282, 284-304, 324-344, and 356-376; these read ADLL…VPLA, IGAV…GLGF, EILH…GLEL, IFGV…GLLM, FLWQ…TAMA, VLLF…LLAG, HFDW…LIGG, FIAA…LVLS, LFMD…GVLL, AIDP…GMSL, LGVL…LVAI, MQFA…FSTA, and ALLL…MKGI. In terms of domain architecture, RCK N-terminal spans 400–519; the sequence is KPQVIVVGFG…AGVTQFSRET (120 aa).

The protein belongs to the monovalent cation:proton antiporter 2 (CPA2) transporter (TC 2.A.37) family. KefB subfamily. In terms of assembly, interacts with the regulatory subunit KefG.

Its subcellular location is the cell inner membrane. In terms of biological role, pore-forming subunit of a potassium efflux system that confers protection against electrophiles. Catalyzes K(+)/H(+) antiport. The chain is Glutathione-regulated potassium-efflux system protein KefB from Salmonella schwarzengrund (strain CVM19633).